Here is a 242-residue protein sequence, read N- to C-terminus: UPF0309 protein BAbS19_II03080 (242 aa).

In terms of domain architecture, SIS spans 30-214; the sequence is AADLIAAAAR…ARLVGEGDAP (185 aa).

It belongs to the UPF0309 family.

The polypeptide is UPF0309 protein BAbS19_II03080 (Brucella abortus (strain S19)).